The following is a 12345-amino-acid chain: Muscle-specific protein 300 kDa (12345 aa).

Disordered stretches follow at residues 1–68 (MADS…STVT) and 121–152 (WSDG…DAEN). The Cytoplasmic portion of the chain corresponds to 1–12295 (MADSGGPGSK…GARFLGRVAR (12295 aa)). A compositionally biased stretch (gly residues) spans 19–28 (AGGGGAGAAG). The segment covering 45 to 60 (EQKSSREQVLEEEKSQ) has biased composition (basic and acidic residues). An LRR 1 repeat occupies 249–273 (FKELENFLEGERTVREVPSADGVRT). 3 disordered regions span residues 295–325 (EGYV…RSVD), 387–488 (TVQV…RKLI), and 504–526 (GKSN…GRPA). Positions 299–321 (SPRDSPSWSRSSYSSERSSVTPP) are enriched in low complexity. Polar residues-rich tracts occupy residues 387–404 (TVQV…STPQ) and 414–434 (TTKT…QTGP). Residues 462 to 484 (TITSTTTKSTSSSTSATSSSSTS) show a composition bias toward low complexity. Residues 511-520 (NDIDIDNDSD) are compositionally biased toward acidic residues. Calponin-homology (CH) domains follow at residues 630–737 (RVQK…LYFQ) and 777–882 (QGAR…HKYP). The LRR 2 repeat unit spans residues 823–847 (LVNLAELKKTSNRQRLETAFDVAES). The TPR 1 repeat unit spans residues 919–952 (SSFPRDFGEYLLARSEVDAHLAAYNRLKQLIESQ). LRR repeat units follow at residues 1089-1112 (CCLI…YGHE), 1389-1411 (HLFH…IHQW), and 1616-1642 (LKDV…ILQR). The stretch at 1603–1636 (LEFRLDENAFYQSLKDVEKELQLEQQALNRNEDV) is one TPR 2 repeat. One copy of the HAT 1 repeat lies at 1903-1935 (TGWNQAYTETSDKLQALKGTQAVWSEFVDQKND). 2 LRR repeats span residues 2087-2109 (KQLD…IAEA) and 2558-2581 (QQQI…FGQA). Residues 2109 to 2233 (AKRLKGEITK…SRWTAVHENA (125 aa)) form the Calponin-homology (CH) 3 domain. Residues 2663–2696 (ADRIQKYNLISQALREYADSKDKFSKELKKAEDL) form a TPR 3 repeat. Positions 2699 to 2724 (AIPQQPRDETELHQASEKTRKTMEQL) are disordered. The segment covering 2704-2724 (PRDETELHQASEKTRKTMEQL) has biased composition (basic and acidic residues). LRR repeat units lie at residues 2728–2751 (KLSL…IGEP), 2935–2959 (CRAL…VDEL), and 3030–3053 (SSDK…IDDC). The stretch at 2894–2962 (EQELRRRSKE…KQKVDELRNL (69 aa)) forms a coiled coil. A Spectrin 1 repeat occupies 3110-3207 (LWSQYEQSNE…AVSKALTSYI (98 aa)). A TPR 4 repeat occupies 3346–3379 (KAKVPTTDELYPTLATKKAALQNYKTQLQEITLH). LRR repeat units lie at residues 3370 to 3393 (KTQL…AVTL), 3437 to 3462 (LEKA…TFEK), 3530 to 3556 (LVKL…WMKN), and 3611 to 3634 (NLKL…SIAK). Residues 3539-3633 (KWDEFDTIIE…LKNLCKESIA (95 aa)) form a Spectrin 2 repeat. The TPR 5 repeat unit spans residues 3629–3662 (KESIAKYVNYVKDHESFDKDFDSFKQNLQSSVDE). The HAT 2 repeat unit spans residues 3706 to 3739 (KLYGHTSPEGREIIRQQLRALRTLWDNYTDDLNS). The stretch at 3748–3771 (LLQFNEFSIAQDQLTKWLKDVDKA) is one LRR 15 repeat. The stretch at 4177–4273 (SYQDILNQTV…YDQVGQDCAK (97 aa)) is one Spectrin 3 repeat. The stretch at 4360–4393 (EVMARDLANLHADFEKFGASLSDVKSGLENRLQQ) is one TPR 6 repeat. The HAT 3 repeat unit spans residues 4371–4403 (ADFEKFGASLSDVKSGLENRLQQWNDYEINLDR). One copy of the Spectrin 4 repeat lies at 4611–4701 (FDEIADSLKS…GKLQKRAQNY (91 aa)). 2 LRR repeats span residues 4654–4676 (NDIN…LPEK) and 4742–4763 (EQIS…LADE). The HAT 4 repeat unit spans residues 4799–4830 (EWESLLTTISSTIEAIEARLQHWSEYEQLRDQ). A Spectrin 5 repeat occupies 4820–4919 (HWSEYEQLRD…VKELNNRWQQ (100 aa)). The LRR 18 repeat unit spans residues 4839 to 4863 (DNNLHAIDLKEDLPKKRAQLDALKA). Residues 4894–4926 (ASGPELVTKYQQIFHKVKELNNRWQQYVTSHED) form an HAT 5 repeat. LRR repeat units follow at residues 5266–5289 (QIDI…EKQV) and 5333–5357 (SSVY…RDQH). Residues 5645 to 5678 (SAEPEDCEIIEQEVALLQEEFDAYREALNKAKDY) form a TPR 7 repeat. LRR repeat units follow at residues 5761 to 5784 (SNAI…VMRR), 5820 to 5843 (PGTL…FETG), and 5979 to 6002 (TKFD…VNSH). Residues 5791-5895 (EHQQHHSLYE…DLNDVRQKLA (105 aa)) form a Spectrin 6 repeat. Residues 6088-6120 (SEWETLQTISRDARSSLESCLAAWQTFLQKFNK) form an HAT 6 repeat. 2 Spectrin repeats span residues 6321–6405 (RWND…DKLK) and 6424–6530 (AYHQ…RLLE). Coiled coils occupy residues 6356–6397 (MKTL…VNRL) and 6454–6484 (REQT…LNAK). The stretch at 6363–6387 (YKTLSNELKLKGNELEQLQSEARDL) is one LRR 24 repeat. One copy of the TPR 8 repeat lies at 6522-6555 (VQIKNRLLESLAKFQEYEDTLDSIMRNLETYEPI). LRR repeat units follow at residues 6531 to 6554 (SLAK…TYEP) and 6560 to 6587 (LDAP…LNNE). Residues 6567 to 6597 (LELAQNQLRCAQEMQNKLNNEKSRLAAAVQA) are a coiled coil. The segment at 6631 to 6657 (EDLLDQKPPPKTRSSTGGVSTDDDKDE) is disordered. A TPR 9 repeat occupies 6660 to 6695 (VEIQVELSDVNEALLDPIAHERVKNYRRIVRLNSAH). The LRR 27 repeat unit spans residues 7004 to 7026 (SALRNLNTENRNLSGVLKAELDR). A TPR 10 repeat occupies 7161–7195 (EMETATEGELRTTSLPVLEEQLAHYKKLLSDAENK). LRR repeat units follow at residues 7219 to 7242 (LKLN…IDDR), 7300 to 7318 (KELK…DDLP), 7319 to 7339 (ELQS…DQLA), and 7340 to 7361 (HLRQ…IIAF). Residues 7419-7457 (KNSITEQLQSLKNQLQNLRKAVESQRQKHQLQLESHKKM) are a coiled coil. An LRR 32 repeat occupies 7524 to 7547 (SSLLEMLSEGRSLVASLPHELEER). Residues 7644-7676 (TKLTNTLANAKTQQSELEKEAERWREYQQSIDR) form an HAT 7 repeat. A TPR 11 repeat occupies 7654-7687 (KTQQSELEKEAERWREYQQSIDRVKATIERTKFV). LRR repeat units lie at residues 7692–7714 (QNLA…VQSQ), 7752–7777 (QDLV…GFEN), and 7816–7840 (LREE…ILTF). A TPR 12 repeat occupies 7759-7792 (EQRRDNLQQLAEHWDGFENSLHAWEKALGRLEDK). The stretch at 7799 to 7935 (TVRSRRHLED…NSQVQQAAEE (137 aa)) forms a coiled coil. A TPR 13 repeat occupies 7878–7911 (SKDLEEIEQVFRRISQLQDKLNALHEQLQSVHVY). LRR repeat units follow at residues 8178–8201 (KISV…EWDQ), 8238–8264 (EKTL…HFRN), 8298–8321 (EQTL…IIQE), and 8354–8377 (DELL…SLDG). The stretch at 8431–8464 (QQGITMIANAMHGQKKRQQEIDEYQQHLLELEQW) is one TPR 14 repeat. The LRR 40 repeat unit spans residues 8534–8557 (EQLQSIITILREQVTVATKRIFTI). Disordered stretches follow at residues 8583–8616 (IKPP…EEEI), 8966–9023 (QKPT…LPAP), 9131–9158 (EFEP…QVVA), 9361–9459 (GKES…PDSD), 9502–9735 (LVED…TSIS), and 9769–9797 (TMQL…EQQL). Residues 8601 to 8611 (SNENTIDSSSM) are compositionally biased toward polar residues. Residues 8982-9011 (TQVTTTTRTTTATTQEQEQPEQQTQPTTTE) show a composition bias toward low complexity. Residues 9136–9151 (SPHEESTKSDLVKPQE) show a composition bias toward basic and acidic residues. Positions 9394–9404 (KRRRKKKKRRD) are enriched in basic residues. The span at 9410 to 9419 (ELEQEQETEP) shows a compositional bias: acidic residues. Residues 9420 to 9439 (EPVAAVKEPEVSSDVPVSPE) show a composition bias toward low complexity. Basic and acidic residues predominate over residues 9440–9451 (DSPRDTVRHESI). Polar residues-rich tracts occupy residues 9544–9563 (AVQT…SQTL), 9587–9597 (ISTTEIQTDVS), and 9605–9625 (EISS…TTPK). Residues 9658–9680 (TSEQSTVTETTTTTETHVQTTTP) show a composition bias toward low complexity. Basic and acidic residues predominate over residues 9681–9698 (EPREQTEVIKPETAHEET). The stretch at 9699 to 9721 (STVELVQFADGEMQTTPPGDQQP) is one LRR 41 repeat. The segment covering 9711-9735 (MQTTPPGDQQPASLDDSSLTATSIS) has biased composition (polar residues). Over residues 9777-9788 (KKSKKDKKKKQK) the composition is skewed to basic residues. LRR repeat units lie at residues 9995–10019 (SNVL…ILEV), 10073–10096 (EEKL…VVQL), 10252–10276 (KEFT…SLEQ), and 10353–10376 (RDEL…TSAD). 2 coiled-coil regions span residues 10072–10099 (SEEK…LERQ) and 10172–10257 (LSAK…FTKI). Residues 10231-10264 (QAERERVLQLQSLAEEYEQTLKEFTKITVLADKL) form a TPR 15 repeat. The stretch at 10426 to 10458 (IVLLKLREEVALYLHRLLVFKEIWVQYEQQTDK) is one HAT 8 repeat. LRR repeat units follow at residues 10512–10535 (EKSL…QLED), 10570–10593 (EREL…EEEL), and 10644–10667 (AEEL…ISNQ). Residues 10854 to 10888 (VVAWNDTSENLQQLRTRYQRAVELWDKYRNASAAV) form a TPR 16 repeat. Residues 10855–10887 (VAWNDTSENLQQLRTRYQRAVELWDKYRNASAA) form an HAT 9 repeat. LRR repeat units lie at residues 10907-10929 (DALQ…ILEL) and 11021-11043 (AHLQ…HQNS). Residues 11016–11046 (LAALRAHLQTLARTEEQLRQLKERHQNSEVA) are a coiled coil. An HAT 10 repeat occupies 11070-11104 (DTFQEYHRLSTRLARSQNSSEALRLWRQYLQHVQS). The stretch at 11072–11105 (FQEYHRLSTRLARSQNSSEALRLWRQYLQHVQSF) is one TPR 17 repeat. An LRR 51 repeat occupies 11197–11222 (EAERNALQLRYIHLKRVPHLKHRLDA). Coiled coils occupy residues 11220 to 11247 (LDAM…LARH) and 11281 to 11308 (LQRV…AQKL). 5 LRR repeats span residues 11342 to 11365 (SALE…DMKT), 11398 to 11422 (LSNY…VEKD), 11670 to 11692 (EELE…LAMS), 11697 to 11720 (PENI…LTPR), and 11744 to 11766 (EATN…ENQQ). The stretch at 11655 to 11685 (KHKLEERQMELRAKLEELESQSVNLRQLEQI) forms a coiled coil. Positions 11776–11806 (LQRLESLEKKLQDAQQHVQQADNLAQEAKTR) form a coiled coil. The HAT 11 repeat unit spans residues 11804-11836 (KTRTKQQPQLKQLLELVSAYTTLWQTVQTRIVT). 2 LRR repeats span residues 11959–11981 (DTVA…RQQH) and 12198–12220 (SRLT…YIVK). The disordered stretch occupies residues 12253–12272 (SMQAAAPNTENANNTDGGDA). Residues 12256-12267 (AAAPNTENANNT) are compositionally biased toward low complexity. Residues 12287 to 12345 (ARFLGRVARASLPIQALMLLLLGVATLVPHGEDYTCMFSNTFARSLEPMLSYPHGPPPT) form the KASH domain. A helical; Anchor for type IV membrane protein membrane pass occupies residues 12296–12316 (ASLPIQALMLLLLGVATLVPH). An LRR 59 repeat occupies 12301–12323 (QALMLLLLGVATLVPHGEDYTCM). At 12317 to 12345 (GEDYTCMFSNTFARSLEPMLSYPHGPPPT) the chain is on the perinuclear space side.

The protein belongs to the nesprin family. As to quaternary structure, core component of LINC complexes which are composed of inner nuclear membrane SUN domain-containing proteins coupled to outer nuclear membrane KASH domain-containing nesprins. Interacts with klar; this interaction allows the anchoring of the Msp300 nuclear ring structure to the nuclear envelope. Interacts with sls; this interaction mediates the recruitment of Msp300 to the Z-disks.

Its subcellular location is the nucleus membrane. The protein resides in the cytoplasm. It is found in the myofibril. It localises to the sarcomere. The protein localises to the z line. Its subcellular location is the cytoskeleton. The protein resides in the microtubule organizing center. It is found in the perinuclear region. In terms of biological role, component of the LINC (LInker of Nucleoskeleton and Cytoskeleton) complex involved in the connection between the nuclear lamina and the cytoskeleton. Collaborates with Klar to promote even spacing of the myonuclei at the periphery of striated muscle fibers by mediating a tight association between a nuclear ring structure of Msp300 and the plus ends of a unique astral MT network. In addition, is essential for anchoring nuclei, mitochondria and endoplasmic reticulum (ER) structures to the Z-disks. In fat body cells, part of perinuclear non-centrosomal microtubule-organizing centers (ncMTOCs) which function to accommodate the organization of microtubule (MT) networks to control nuclear positioning and dynein motor-based retrograde endosomal trafficking. Functions as the primary organizer of the ncMTOC by recruiting Patronin, shot and msps to the organizing centre. Within the ncMTOC, Msp300 and shot anchors the ncMTOC at the nuclear surface and recruits the MT minus-end regulators Patronin and Nin for assembly, anchoring and/or stabilization of circumferential and radial MTs at the ncMTOCs. Patronin, and perhaps Nin, recruits msps to the ncMTOC for the gamma-tubulin-independent elongation of radial MTs. This is Muscle-specific protein 300 kDa from Drosophila melanogaster (Fruit fly).